The sequence spans 340 residues: Ketol-acid reductoisomerase (NADP(+)) (340 aa).

The region spanning Ala-2–Thr-181 is the KARI N-terminal Rossmann domain. Residues Tyr-25–Gln-28, Arg-48, Ser-52, and Asp-82–Gln-85 each bind NADP(+). Residue His-107 is part of the active site. Gly-133 is an NADP(+) binding site. Residues Thr-182–Val-327 enclose the KARI C-terminal knotted domain. The Mg(2+) site is built by Asp-190, Glu-194, Glu-226, and Glu-230. Ser-251 serves as a coordination point for substrate.

The protein belongs to the ketol-acid reductoisomerase family. Requires Mg(2+) as cofactor.

It catalyses the reaction (2R)-2,3-dihydroxy-3-methylbutanoate + NADP(+) = (2S)-2-acetolactate + NADPH + H(+). The enzyme catalyses (2R,3R)-2,3-dihydroxy-3-methylpentanoate + NADP(+) = (S)-2-ethyl-2-hydroxy-3-oxobutanoate + NADPH + H(+). Its pathway is amino-acid biosynthesis; L-isoleucine biosynthesis; L-isoleucine from 2-oxobutanoate: step 2/4. It functions in the pathway amino-acid biosynthesis; L-valine biosynthesis; L-valine from pyruvate: step 2/4. Involved in the biosynthesis of branched-chain amino acids (BCAA). Catalyzes an alkyl-migration followed by a ketol-acid reduction of (S)-2-acetolactate (S2AL) to yield (R)-2,3-dihydroxy-isovalerate. In the isomerase reaction, S2AL is rearranged via a Mg-dependent methyl migration to produce 3-hydroxy-3-methyl-2-ketobutyrate (HMKB). In the reductase reaction, this 2-ketoacid undergoes a metal-dependent reduction by NADPH to yield (R)-2,3-dihydroxy-isovalerate. This is Ketol-acid reductoisomerase (NADP(+)) from Halalkalibacterium halodurans (strain ATCC BAA-125 / DSM 18197 / FERM 7344 / JCM 9153 / C-125) (Bacillus halodurans).